A 330-amino-acid chain; its full sequence is Uroporphyrinogen decarboxylase (330 aa).

Substrate contacts are provided by residues 10–14 (RQAGR), phenylalanine 29, serine 59, aspartate 60, tyrosine 137, serine 192, and histidine 307.

This sequence belongs to the uroporphyrinogen decarboxylase family. Homodimer.

The protein resides in the plastid. It localises to the chloroplast. It catalyses the reaction uroporphyrinogen III + 4 H(+) = coproporphyrinogen III + 4 CO2. Its pathway is porphyrin-containing compound metabolism; protoporphyrin-IX biosynthesis; coproporphyrinogen-III from 5-aminolevulinate: step 4/4. Its function is as follows. Catalyzes the decarboxylation of four acetate groups of uroporphyrinogen-III to yield coproporphyrinogen-III. This is Uroporphyrinogen decarboxylase (DCUP) from Hordeum vulgare (Barley).